Here is a 302-residue protein sequence, read N- to C-terminus: Succinate--CoA ligase [ADP-forming] subunit alpha (302 aa).

Residues 17-20 (TGST), lysine 43, and 96-98 (ITE) contribute to the CoA site. Residue tyrosine 159 coordinates substrate. The active-site Tele-phosphohistidine intermediate is histidine 247.

Belongs to the succinate/malate CoA ligase alpha subunit family. Heterotetramer of two alpha and two beta subunits.

It carries out the reaction succinate + ATP + CoA = succinyl-CoA + ADP + phosphate. It catalyses the reaction GTP + succinate + CoA = succinyl-CoA + GDP + phosphate. It participates in carbohydrate metabolism; tricarboxylic acid cycle; succinate from succinyl-CoA (ligase route): step 1/1. Its function is as follows. Succinyl-CoA synthetase functions in the citric acid cycle (TCA), coupling the hydrolysis of succinyl-CoA to the synthesis of either ATP or GTP and thus represents the only step of substrate-level phosphorylation in the TCA. The alpha subunit of the enzyme binds the substrates coenzyme A and phosphate, while succinate binding and nucleotide specificity is provided by the beta subunit. In Staphylococcus epidermidis (strain ATCC 12228 / FDA PCI 1200), this protein is Succinate--CoA ligase [ADP-forming] subunit alpha.